The chain runs to 400 residues: Argininosuccinate synthase (400 aa).

ATP contacts are provided by residues 10-18 (AYSGGVDTS) and alanine 38. Tyrosine 89 serves as a coordination point for L-citrulline. Glycine 119 is a binding site for ATP. Residues threonine 121, asparagine 125, and aspartate 126 each coordinate L-aspartate. An L-citrulline-binding site is contributed by asparagine 125. The L-citrulline site is built by arginine 129, serine 177, serine 186, glutamate 262, and tyrosine 274.

The protein belongs to the argininosuccinate synthase family. Type 1 subfamily. As to quaternary structure, homotetramer.

The protein resides in the cytoplasm. It catalyses the reaction L-citrulline + L-aspartate + ATP = 2-(N(omega)-L-arginino)succinate + AMP + diphosphate + H(+). It functions in the pathway amino-acid biosynthesis; L-arginine biosynthesis; L-arginine from L-ornithine and carbamoyl phosphate: step 2/3. The protein is Argininosuccinate synthase of Prochlorococcus marinus (strain NATL2A).